Here is a 106-residue protein sequence, read N- to C-terminus: Nucleoid-associated protein RPB_0667 (106 aa).

This sequence belongs to the YbaB/EbfC family. In terms of assembly, homodimer.

Its subcellular location is the cytoplasm. The protein localises to the nucleoid. Functionally, binds to DNA and alters its conformation. May be involved in regulation of gene expression, nucleoid organization and DNA protection. The polypeptide is Nucleoid-associated protein RPB_0667 (Rhodopseudomonas palustris (strain HaA2)).